The following is a 256-amino-acid chain: Hydroxyacylglutathione hydrolase (256 aa).

Zn(2+) contacts are provided by His-57, His-59, Asp-61, His-62, His-115, Asp-134, and His-172.

Belongs to the metallo-beta-lactamase superfamily. Glyoxalase II family. As to quaternary structure, monomer. Requires Zn(2+) as cofactor.

The catalysed reaction is an S-(2-hydroxyacyl)glutathione + H2O = a 2-hydroxy carboxylate + glutathione + H(+). The protein operates within secondary metabolite metabolism; methylglyoxal degradation; (R)-lactate from methylglyoxal: step 2/2. In terms of biological role, thiolesterase that catalyzes the hydrolysis of S-D-lactoyl-glutathione to form glutathione and D-lactic acid. This is Hydroxyacylglutathione hydrolase from Rhizobium etli (strain ATCC 51251 / DSM 11541 / JCM 21823 / NBRC 15573 / CFN 42).